The sequence spans 87 residues: Large ribosomal subunit protein eL34 (87 aa).

Belongs to the eukaryotic ribosomal protein eL34 family.

This Sulfurisphaera tokodaii (strain DSM 16993 / JCM 10545 / NBRC 100140 / 7) (Sulfolobus tokodaii) protein is Large ribosomal subunit protein eL34.